The sequence spans 1044 residues: Disease resistance protein PIK6-NP (1044 aa).

Residues 3-184 (LAVGASEATM…PQIVSIKEPV (182 aa)) form a structured coiled coil (CC) domain region. Residues 187–543 (KTVMENLEKW…IAEGFATEKQ (357 aa)) form the NB-ARC domain. The tract at residues 258–302 (QVSKQEEAGGSTESSSRDENTREPQGSSSTSSREENTAESGTKRM) is disordered. LRR repeat units follow at residues 635-657 (LAQVRSLTVFGNLNHVPFHSFNY), 682-705 (MLVLKYLSIRRTEIAKIPSKIEKL), and 706-728 (EYLETLDIRETYVEELPKSVGQL). The tract at residues 737 to 771 (GNKNTRKGLRLPQEKRNKAMKNPSPQGKTKEPAEK) is disordered. 6 LRR repeats span residues 808-834 (LTGLRKLAIYKLKISEENDTFKELLSS), 840-862 (SCGLQTLAINDENSKFINSLYNM), 866-888 (PRYLVSLELSGKLKWLPEWITSI), 889-911 (TTLNKLTISITVLTTETLEILRN), 935-958 (KGILEDNKLATDGEIVIPAKEFKS), and 980-1004 (MPALEIIEMRFQEFEGLFGIEILEN).

It belongs to the disease resistance NB-LRR family.

Its function is as follows. Probable disease resistance protein. Resistance proteins guard the plant against pathogens that contain an appropriate avirulence protein via an indirect interaction with this avirulence protein. That triggers a defense system including the hypersensitive response, which restricts the pathogen growth. At the opposite of cultivar Kusabue, the cultivar Nipponbare doesn't recognize the effector avirulence protein AVR-Pik from M.oryzae. The polypeptide is Disease resistance protein PIK6-NP (Oryza sativa subsp. japonica (Rice)).